The chain runs to 946 residues: Bifunctional glutamine synthetase adenylyltransferase/adenylyl-removing enzyme (946 aa).

Residues 1–440 (MKPLSSPLQQ…VFNELIGDDE (440 aa)) are adenylyl removase. The tract at residues 449–946 (SEQWRELWQD…ASWQKWLVEE (498 aa)) is adenylyl transferase.

This sequence belongs to the GlnE family. Mg(2+) is required as a cofactor.

The enzyme catalyses [glutamine synthetase]-O(4)-(5'-adenylyl)-L-tyrosine + phosphate = [glutamine synthetase]-L-tyrosine + ADP. The catalysed reaction is [glutamine synthetase]-L-tyrosine + ATP = [glutamine synthetase]-O(4)-(5'-adenylyl)-L-tyrosine + diphosphate. Involved in the regulation of glutamine synthetase GlnA, a key enzyme in the process to assimilate ammonia. When cellular nitrogen levels are high, the C-terminal adenylyl transferase (AT) inactivates GlnA by covalent transfer of an adenylyl group from ATP to specific tyrosine residue of GlnA, thus reducing its activity. Conversely, when nitrogen levels are low, the N-terminal adenylyl removase (AR) activates GlnA by removing the adenylyl group by phosphorolysis, increasing its activity. The regulatory region of GlnE binds the signal transduction protein PII (GlnB) which indicates the nitrogen status of the cell. The polypeptide is Bifunctional glutamine synthetase adenylyltransferase/adenylyl-removing enzyme (Shigella flexneri).